The chain runs to 724 residues: Aquaglyceroporin-4 (724 aa).

Disordered stretches follow at residues 1 to 167, 248 to 267, and 302 to 396; these read MADE…SIRR, INMA…NQAD, and AHGL…DLDG. Residues 1 to 434 are Cytoplasmic-facing; sequence MADEEIKPTS…VIRLRFREPL (434 aa). Residues 87-96 show a composition bias toward polar residues; sequence LTGQVPQDND. The span at 252–265 shows a compositional bias: low complexity; the sequence is QQQQQQQQQQPQNQ. 2 stretches are compositionally biased toward polar residues: residues 307–325 and 360–370; these read SPTN…TAPS and PSQTSQNSQNE. Residues 435 to 455 traverse the membrane as a helical segment; sequence AELLAVTCQLTLGFCADLVVV. Residues 456-472 are Extracellular-facing; it reads TSGKNASPAGNEATTDW. The helical transmembrane segment at 473 to 493 threads the bilayer; the sequence is AWGLASMLGIYIAGGISGAHL. An NPA 1 motif is present at residues 494–496; that stretch reads NPA. Over 494 to 513 the chain is Cytoplasmic; the sequence is NPAISIMLWIYRGFPLRKVP. The helical transmembrane segment at 514–534 threads the bilayer; the sequence is MYVLAQILGAFIAALISFGLY. Residues 535–567 are Extracellular-facing; the sequence is QTNIVEYGGTDLKTSDTMGAFITYPRYPWINAS. Residue N565 is glycosylated (N-linked (GlcNAc...) asparagine). The chain crosses the membrane as a helical span at residues 568-588; sequence TSFFTEFVGTAILAVAVLALG. Residues 589–595 lie on the Cytoplasmic side of the membrane; that stretch reads DDMNAPP. The helical transmembrane segment at 596–616 threads the bilayer; it reads GAGMSAFILGLVITVLSMAFG. Residues 617 to 647 lie on the Extracellular side of the membrane; it reads YNTGAALNPSRDLGPRLALAALGYGKDLFTD. The short motif at 624 to 626 is the NPA 2 element; sequence NPS. Residues 648-668 form a helical membrane-spanning segment; it reads VYWIWGNWCAPILGAIFGAFL. The Cytoplasmic segment spans residues 669 to 724; it reads YDAAIFAGGESPVNYPRKRIKRAGHKWRKKWGVRLRKMKPAKKGEDEAYRRWKESQ.

The protein belongs to the MIP/aquaporin (TC 1.A.8) family.

Its subcellular location is the membrane. The catalysed reaction is H2O(in) = H2O(out). The enzyme catalyses glycerol(in) = glycerol(out). Functionally, water channel required to facilitate the transport of water across membranes. May play a role in the vegetative growth. The protein is Aquaglyceroporin-4 of Botryotinia fuckeliana (strain B05.10) (Noble rot fungus).